A 281-amino-acid chain; its full sequence is Bifunctional protein FolD (281 aa).

NADP(+) contacts are provided by residues 164 to 166, serine 189, and isoleucine 230; that span reads GRS.

This sequence belongs to the tetrahydrofolate dehydrogenase/cyclohydrolase family. Homodimer.

The catalysed reaction is (6R)-5,10-methylene-5,6,7,8-tetrahydrofolate + NADP(+) = (6R)-5,10-methenyltetrahydrofolate + NADPH. It catalyses the reaction (6R)-5,10-methenyltetrahydrofolate + H2O = (6R)-10-formyltetrahydrofolate + H(+). It functions in the pathway one-carbon metabolism; tetrahydrofolate interconversion. Functionally, catalyzes the oxidation of 5,10-methylenetetrahydrofolate to 5,10-methenyltetrahydrofolate and then the hydrolysis of 5,10-methenyltetrahydrofolate to 10-formyltetrahydrofolate. This is Bifunctional protein FolD from Pelagibacter ubique (strain HTCC1062).